The chain runs to 283 residues: Bifunctional protein FolD (283 aa).

NADP(+)-binding positions include 164–166 (GSS), Ile-189, and Ile-230.

Belongs to the tetrahydrofolate dehydrogenase/cyclohydrolase family. As to quaternary structure, homodimer.

It carries out the reaction (6R)-5,10-methylene-5,6,7,8-tetrahydrofolate + NADP(+) = (6R)-5,10-methenyltetrahydrofolate + NADPH. The enzyme catalyses (6R)-5,10-methenyltetrahydrofolate + H2O = (6R)-10-formyltetrahydrofolate + H(+). The protein operates within one-carbon metabolism; tetrahydrofolate interconversion. Its function is as follows. Catalyzes the oxidation of 5,10-methylenetetrahydrofolate to 5,10-methenyltetrahydrofolate and then the hydrolysis of 5,10-methenyltetrahydrofolate to 10-formyltetrahydrofolate. The chain is Bifunctional protein FolD from Fusobacterium nucleatum subsp. nucleatum (strain ATCC 25586 / DSM 15643 / BCRC 10681 / CIP 101130 / JCM 8532 / KCTC 2640 / LMG 13131 / VPI 4355).